We begin with the raw amino-acid sequence, 427 residues long: Glutamate-1-semialdehyde 2,1-aminomutase (427 aa).

Lys-265 bears the N6-(pyridoxal phosphate)lysine mark.

This sequence belongs to the class-III pyridoxal-phosphate-dependent aminotransferase family. HemL subfamily. In terms of assembly, homodimer. The cofactor is pyridoxal 5'-phosphate.

The protein resides in the cytoplasm. It carries out the reaction (S)-4-amino-5-oxopentanoate = 5-aminolevulinate. It functions in the pathway porphyrin-containing compound metabolism; protoporphyrin-IX biosynthesis; 5-aminolevulinate from L-glutamyl-tRNA(Glu): step 2/2. This Photorhabdus laumondii subsp. laumondii (strain DSM 15139 / CIP 105565 / TT01) (Photorhabdus luminescens subsp. laumondii) protein is Glutamate-1-semialdehyde 2,1-aminomutase.